The chain runs to 423 residues: MAGRQSGWSQAALLQFLLGMCLMVMPPIQARSLRFVTLLYRHGDRSPVKAYPKDPYQEEKWPQGFGQLTKEGMLQHWELGQALRQRYHGFLNASYHRQEVYVRSTDFDRTLMSAEANLAGLFPPTEVQHFNPNISWQPIPVHTVPITEDRLLKFPLGPCPRYEQLQNETRQTPEYQNMSIQNAQFLDMVANETGLMNLTLETIWNVYDTLFCEQTHGLLLPPWASPQTVQALSQLKDFSFLFLFGIHDQVQKARLQGGVLLAQILKNLTLMATTSQFPKLLVYSAHDTTLVALQMALNVYNGKQAPYASCHIFELYQEDNGNFSVEMYFRNDSKKAPWPLTLPGCPHRCPLQDFLRLTEPVIPKDWQKECQLASDTADTEVIVALAVCGSILFLLIVLLLTVLFRMQAQPPGYHHVADREDHA.

The signal sequence occupies residues 1 to 30; sequence MAGRQSGWSQAALLQFLLGMCLMVMPPIQA. Residues 31 to 380 are Lumenal-facing; sequence RSLRFVTLLY…QLASDTADTE (350 aa). Histidine 42 functions as the Nucleophile in the catalytic mechanism. 7 N-linked (GlcNAc...) asparagine glycosylation sites follow: asparagine 92, asparagine 133, asparagine 167, asparagine 177, asparagine 191, asparagine 197, and asparagine 267. Disulfide bonds link cysteine 159-cysteine 370, cysteine 212-cysteine 310, and cysteine 345-cysteine 349. The Proton donor role is filled by aspartate 287. N-linked (GlcNAc...) asparagine glycans are attached at residues asparagine 322 and asparagine 331. Residues 381–401 form a helical membrane-spanning segment; it reads VIVALAVCGSILFLLIVLLLT. Residues 402–423 are Cytoplasmic-facing; it reads VLFRMQAQPPGYHHVADREDHA.

Belongs to the histidine acid phosphatase family. The membrane-bound form is converted to the soluble form by sequential proteolytic processing. First, the C-terminal cytoplasmic tail is removed. Cleavage by a lysosomal protease releases the soluble form in the lysosome lumen.

The protein resides in the lysosome membrane. Its subcellular location is the lysosome lumen. It carries out the reaction a phosphate monoester + H2O = an alcohol + phosphate. This is Lysosomal acid phosphatase (Acp2) from Rattus norvegicus (Rat).